A 1003-amino-acid polypeptide reads, in one-letter code: Calcium-transporting ATPase sarcoplasmic/endoplasmic reticulum type (1003 aa).

Topologically, residues 1-59 (MEDAHAKKWEEVVDYFGVDPERGLALEQVKKNQEKYGPNELPAEEGKSLLTLILEQFDD) are cytoplasmic. Residues 60-78 (LLVKILLLAAIISLVLALF) traverse the membrane as a helical segment. The Extracellular segment spans residues 79-89 (EEHDDEAEQLT). Residues 90–110 (AYVEPFVILLILIANAVVGVW) form a helical membrane-spanning segment. Over 111-262 (QEKNAESAIE…QQKLDEFGEQ (152 aa)) the chain is Cytoplasmic. A helical membrane pass occupies residues 263-282 (LSKVISVICVAVWAINIGHF). At 283-300 (NDPAHGGSWIKGAIYYFK) the chain is on the extracellular side. Residues 301 to 318 (IAVALAVAAIPEGLPAVI) traverse the membrane as a helical segment. Topologically, residues 319-775 (TTCLALGTRR…RYLISSNIGE (457 aa)) are cytoplasmic. D354 serves as the catalytic 4-aspartylphosphate intermediate. Position 519 (K519) interacts with ATP. A helical transmembrane segment spans residues 776–799 (VVSIFLTAALGLPEALIPVQLLWV). Topologically, residues 800 to 840 (NLVTDGLPATALGFNPPDLDIMNKPPRRADEGLITGWLFFR) are extracellular. The chain crosses the membrane as a helical span at residues 841–863 (YMAIGTYVGAATVGAAAHWFMMS). Residues 864–898 (PTGPGLNFYQLSHHLQCTPENEYFEGIDCEIFSDP) lie on the Cytoplasmic side of the membrane. The chain crosses the membrane as a helical span at residues 899-917 (HPMTMALSVLVTIEMLNAI). At 918–934 (NSLSENQSLLVMPPWSN) the chain is on the extracellular side. The helical transmembrane segment at 935-954 (IWLISAICLSMTLHFVILYV) threads the bilayer. Residues 955–1003 (EILSTVFQICPLTLTEWIVVLKISFPVLLLDEVLKFVARKYTDEFSFIK) lie on the Cytoplasmic side of the membrane.

Belongs to the cation transport ATPase (P-type) (TC 3.A.3) family.

The protein localises to the sarcoplasmic reticulum membrane. It catalyses the reaction Ca(2+)(in) + ATP + H2O = Ca(2+)(out) + ADP + phosphate + H(+). Its function is as follows. This magnesium-dependent enzyme catalyzes the hydrolysis of ATP coupled with the transport of the calcium. This is Calcium-transporting ATPase sarcoplasmic/endoplasmic reticulum type from Artemia franciscana (Brine shrimp).